The primary structure comprises 245 residues: DNA polymerase sliding clamp (245 aa).

Belongs to the PCNA family. As to quaternary structure, homotrimer. The subunits circularize to form a toroid; DNA passes through its center. Replication factor C (RFC) is required to load the toroid on the DNA.

Its function is as follows. Sliding clamp subunit that acts as a moving platform for DNA processing. Responsible for tethering the catalytic subunit of DNA polymerase and other proteins to DNA during high-speed replication. This Methanosarcina acetivorans (strain ATCC 35395 / DSM 2834 / JCM 12185 / C2A) protein is DNA polymerase sliding clamp.